A 395-amino-acid polypeptide reads, in one-letter code: Elongation factor Tu (395 aa).

The tr-type G domain occupies 10 to 204 (KTHANIGTIG…AVDEYIPTPE (195 aa)). Positions 19 to 26 (GHVDHGKT) are G1. 19–26 (GHVDHGKT) provides a ligand contact to GTP. T26 provides a ligand contact to Mg(2+). Residues 60–64 (GITIN) are G2. The interval 81–84 (DCPG) is G3. GTP-binding positions include 81 to 85 (DCPGH) and 136 to 139 (NKVD). The tract at residues 136 to 139 (NKVD) is G4. Residues 174–176 (SAL) form a G5 region.

This sequence belongs to the TRAFAC class translation factor GTPase superfamily. Classic translation factor GTPase family. EF-Tu/EF-1A subfamily. In terms of assembly, monomer.

It is found in the cytoplasm. It carries out the reaction GTP + H2O = GDP + phosphate + H(+). Its function is as follows. GTP hydrolase that promotes the GTP-dependent binding of aminoacyl-tRNA to the A-site of ribosomes during protein biosynthesis. The protein is Elongation factor Tu of Macrococcus caseolyticus (strain JCSC5402) (Macrococcoides caseolyticum).